The sequence spans 288 residues: Co-chaperone protein DjlA (288 aa).

Topologically, residues Met-1–Lys-6 are periplasmic. The chain crosses the membrane as a helical span at residues Ile-7 to His-30. Topologically, residues Ile-31–Lys-288 are cytoplasmic. The J domain maps to Asp-222–Lys-288.

As to quaternary structure, homodimer.

The protein localises to the cell inner membrane. In terms of biological role, regulatory DnaK co-chaperone. Direct interaction between DnaK and DjlA is needed for the induction of the wcaABCDE operon, involved in the synthesis of a colanic acid polysaccharide capsule, possibly through activation of the RcsB/RcsC phosphotransfer signaling pathway. The colanic acid capsule may help the bacterium survive conditions outside the host. In Mannheimia succiniciproducens (strain KCTC 0769BP / MBEL55E), this protein is Co-chaperone protein DjlA.